Consider the following 421-residue polypeptide: Cyclin-A1 (421 aa).

The tract at residues 1–20 is disordered; the sequence is MRRHSSKSGVALPPVGQGPD.

The protein belongs to the cyclin family. Cyclin AB subfamily. Interacts with the CDK2 and the CDC2 protein kinases to form a serine/threonine kinase holoenzyme complex. The cyclin subunit imparts substrate specificity to the complex. Does not bind CDK4 and CDK5 (in vitro). The cyclin A1-CDK2 complex interacts with transcription factor E2F-1 and RB proteins. Found in a complex with CDK2, CABLES1 and CCNE1. Interacts with INCA1 and KLHDC9. Polyubiquitinated via 'Lys-11'-linked ubiquitin by the anaphase-promoting complex (APC/C), leading to its degradation by the proteasome. Deubiquitinated and stabilized by USP37 enables entry into S phase. Ubiquitinated during the G1 phase by the SCF(FBXO31) complex, leading to its proteasomal degradation.

The protein localises to the nucleus. In terms of biological role, may be involved in the control of the cell cycle at the G1/S (start) and G2/M (mitosis) transitions. May primarily function in the control of the germline meiotic cell cycle and additionally in the control of mitotic cell cycle in some somatic cells. The polypeptide is Cyclin-A1 (Ccna1) (Rattus norvegicus (Rat)).